Here is a 326-residue protein sequence, read N- to C-terminus: Phospholipid scramblase 4 (326 aa).

The interval 1–32 (MSGLVPTAPEQPTEEMENQIKSPTAVPDAPPD) is disordered. The segment at 1–94 (MSGLVPTAPE…PVTNQPAPIM (94 aa)) is proline-rich domain (PRD). Residues 1–299 (MSGLVPTAPE…IRFPLALDVK (299 aa)) lie on the Cytoplasmic side of the membrane. The short motif at 18-25 (NQIKSPTA) is the SH3-binding 1 element. The PPxY motif motif lies at 30 to 33 (PPDY). The SH3-binding 2 signature appears at 41 to 49 (PAGPVASPS). Phosphotyrosine; by ABL occurs at positions 79 and 84. The short motif at 94–102 (MWMAGPAPV) is the SH3-binding 3 element. S-palmitoyl cysteine attachment occurs at residues Cys-193, Cys-194, Cys-195, Cys-197, and Cys-198. The helical transmembrane segment at 300 to 316 (MKAMIFGSCFLIDFMYF) threads the bilayer. Topologically, residues 317–326 (ERPPPRRMSR) are extracellular.

Belongs to the phospholipid scramblase family. Interacts with PDCD6. Interacts with KPNA2; this interaction mediates the nucleus import of PLSCR4. The cofactor is Ca(2+). It depends on Mg(2+) as a cofactor. Zn(2+) is required as a cofactor.

It is found in the cell membrane. The protein localises to the nucleus. It carries out the reaction a 1,2-diacyl-sn-glycero-3-phosphocholine(in) = a 1,2-diacyl-sn-glycero-3-phosphocholine(out). The catalysed reaction is a 1,2-diacyl-sn-glycero-3-phospho-L-serine(in) = a 1,2-diacyl-sn-glycero-3-phospho-L-serine(out). In terms of biological role, catalyzes metal ion-induced ATP-independent rapid bidirectional and non-specific movement of phospholipids (lipid scrambling or lipid flip-flop) between the inner and outer leaflet of the plasma membrane and participates in the redistribution of phospholipids between membrane leaflets. Metal ions bind to the calcium-binding site and induce conformation change in the protein. Has a greater affi nity for Ca(2+) than Mg(2+) and Zn(2+). The sequence is that of Phospholipid scramblase 4 from Mus musculus (Mouse).